The chain runs to 164 residues: 3-hydroxyacyl-[acyl-carrier-protein] dehydratase FabZ (164 aa).

His70 is an active-site residue.

It belongs to the thioester dehydratase family. FabZ subfamily.

The protein localises to the cytoplasm. The enzyme catalyses a (3R)-hydroxyacyl-[ACP] = a (2E)-enoyl-[ACP] + H2O. Functionally, involved in unsaturated fatty acids biosynthesis. Catalyzes the dehydration of short chain beta-hydroxyacyl-ACPs and long chain saturated and unsaturated beta-hydroxyacyl-ACPs. The chain is 3-hydroxyacyl-[acyl-carrier-protein] dehydratase FabZ from Synechocystis sp. (strain ATCC 27184 / PCC 6803 / Kazusa).